The following is a 548-amino-acid chain: Natural resistance-associated macrophage protein 1 (548 aa).

Positions 1-38 are disordered; that stretch reads MPGDMGPPKQGGTRYGSISSPPSPGPQQAPPGGTYLSE. Residues 1-55 lie on the Cytoplasmic side of the membrane; that stretch reads MPGDMGPPKQGGTRYGSISSPPSPGPQQAPPGGTYLSEKIPIPDTESGAFSLRKL. The chain crosses the membrane as a helical span at residues 56–73; that stretch reads WAFTGPGFLMSIAFLDPG. The Extracellular segment spans residues 74 to 82; the sequence is NIESDLQAG. A helical transmembrane segment spans residues 83 to 102; that stretch reads AVAGFKLLWVLLWATVLGLL. The Cytoplasmic portion of the chain corresponds to 103–139; it reads CQRLAARLGVVTGKDLGEVCHLYYPKVPRILLWLTIE. A helical transmembrane segment spans residues 140 to 160; it reads LAIVGSDMQEVIGTAIAFSLL. Residues 161 to 164 are Extracellular-facing; sequence SAGR. The helical transmembrane segment at 165-184 threads the bilayer; that stretch reads IPLWGGVLITIVDTFFFLFL. Residues 185–193 are Cytoplasmic-facing; the sequence is DNYGLRKLE. A helical transmembrane segment spans residues 194–214; the sequence is AFFGFLITIMALTFGYEYVVA. At 215–237 the chain is on the extracellular side; sequence RPAQGALLQGLFLPSCAGCGQPE. Residues 238 to 256 traverse the membrane as a helical segment; that stretch reads LLQAVGIVGAIIMPHNIYL. Over 257 to 284 the chain is Cytoplasmic; sequence HSSLVKSREVDRSRRADIREANMYFLIE. Residues 285-304 traverse the membrane as a helical segment; the sequence is ATIALSVSFLINLFVMAVFG. Residues 305 to 346 are Extracellular-facing; sequence QAFYKQTNQAAFNICANSSLHDYATIFPRNNLTVAVDIYQGG. N-linked (GlcNAc...) asparagine glycans are attached at residues N321 and N335. A helical transmembrane segment spans residues 347–366; it reads VILGCLFGPAALYIWAVGLL. The Cytoplasmic segment spans residues 367–397; that stretch reads AAGQSSTMTGTYAGQFVMEGFLKLRWSRFAR. A helical transmembrane segment spans residues 398 to 415; sequence VLLTRSCAILPTVLVAVF. The Extracellular portion of the chain corresponds to 416–426; it reads RDLRDLSGLND. A helical membrane pass occupies residues 427–447; sequence LLNVLQSLLLPFAVLPILTFT. Topologically, residues 448-463 are cytoplasmic; that stretch reads SMPAVMQEFANGLVSK. The chain crosses the membrane as a helical span at residues 464-485; the sequence is VISSSIMVLVCAVNLYFVISYV. At 486 to 493 the chain is on the extracellular side; it reads PSLPHPDY. The helical transmembrane segment at 494–513 threads the bilayer; the sequence is FSLVALLAAAYLGLTTYLVW. Residues 514–548 lie on the Cytoplasmic side of the membrane; the sequence is TCLITQGATLLAHSSHQRFLYGLPEEDQENGRTSG.

This sequence belongs to the NRAMP family.

The protein resides in the late endosome membrane. Its subcellular location is the lysosome membrane. The catalysed reaction is Zn(2+)(in) + H(+)(out) = Zn(2+)(out) + H(+)(in). It catalyses the reaction Fe(2+)(in) + H(+)(out) = Fe(2+)(out) + H(+)(in). It carries out the reaction Mn(2+)(in) + H(+)(out) = Mn(2+)(out) + H(+)(in). In terms of biological role, macrophage-specific antiporter that fluxes metal ions in either direction against a proton gradient. Localized to late endosomal lysosomal membranes, delivers bivalent cations from the cytosol into these acidic compartments where they may directly affect antimicrobial activity. Involved in iron metabolism and host natural resistance to infection with intracellular parasites. Pathogen resistance involves sequestration of Fe(2+) and Mn(2+), cofactors of both prokaryotic and eukaryotic catalases and superoxide dismutases, not only to protect the macrophage against its own generation of reactive oxygen species, but to deny the cations to the pathogen for synthesis of its protective enzymes. The sequence is that of Natural resistance-associated macrophage protein 1 (SLC11A1) from Cervus elaphus (Red deer).